Here is a 118-residue protein sequence, read N- to C-terminus: HTH-type transcriptional regulator CmtR (118 aa).

The HTH arsR-type domain maps to 3-97 (TCEMRESALA…ELVQVVLAVD (95 aa)). Cd(2+)-binding residues include cysteine 57, cysteine 61, and cysteine 102.

As to quaternary structure, homodimer.

Functionally, metal-responsive transcriptional repressor for the cmt operon. Binding of cadmium or lead causes the repressor to dissociate from the DNA. The sequence is that of HTH-type transcriptional regulator CmtR (cmtR) from Mycobacterium bovis (strain ATCC BAA-935 / AF2122/97).